A 633-amino-acid chain; its full sequence is GRAM domain-containing protein 4 (633 aa).

Disordered regions lie at residues 1–46 (MGIA…VRPR), 72–109 (LAESPNASDTECGDEIPLKTPRPSPRDSEELRDPAGPG), and 182–216 (VLKARSEEQPAQPQQPPKGQSQASNGTGTERRSQG). Positions 27–39 (PWDKGLSGREPPR) are enriched in basic and acidic residues. 2 positions are modified to phosphoserine: Ser-75 and Ser-79. The segment covering 95 to 104 (SPRDSEELRD) has biased composition (basic and acidic residues). Residues 134-190 (HLEIALLEKHFLQEELRKLREETNSEMLRQELDRERQRRIELEQKMQEVLKARSEEQ) adopt a coiled-coil conformation. The segment covering 190-205 (QPAQPQQPPKGQSQAS) has biased composition (low complexity). The next 3 helical transmembrane spans lie at 295-315 (VYMNAVWHGWAIPMFLFLAIL), 389-409 (TTQKLYVALWAAFLASCFFPY), and 411-431 (LVGLAVGLYAGIKFFLIDFIF). The GRAM domain maps to 500-578 (GNFHEIFNLT…MDITDIQKYK (79 aa)).

In terms of assembly, interacts with RTN4 (isoform B).

Its subcellular location is the mitochondrion membrane. It localises to the endoplasmic reticulum membrane. Functionally, plays a role as a mediator of E2F1-induced apoptosis in the absence of p53/TP53. Inhibits TLR9 response to nucelic acids and regulates TLR9-mediated innate immune response. The sequence is that of GRAM domain-containing protein 4 from Mus musculus (Mouse).